The chain runs to 209 residues: Molybdenum cofactor guanylyltransferase (209 aa).

GTP is bound by residues 13 to 15 (LAG), lysine 26, asparagine 54, aspartate 72, and aspartate 107. Residue aspartate 107 coordinates Mg(2+).

The protein belongs to the MobA family. In terms of assembly, monomer. Mg(2+) serves as cofactor.

It localises to the cytoplasm. The enzyme catalyses Mo-molybdopterin + GTP + H(+) = Mo-molybdopterin guanine dinucleotide + diphosphate. Its function is as follows. Transfers a GMP moiety from GTP to Mo-molybdopterin (Mo-MPT) cofactor (Moco or molybdenum cofactor) to form Mo-molybdopterin guanine dinucleotide (Mo-MGD) cofactor. The chain is Molybdenum cofactor guanylyltransferase from Nitrobacter hamburgensis (strain DSM 10229 / NCIMB 13809 / X14).